A 506-amino-acid polypeptide reads, in one-letter code: Probable malate:quinone oxidoreductase (506 aa).

Belongs to the MQO family. FAD serves as cofactor.

The catalysed reaction is (S)-malate + a quinone = a quinol + oxaloacetate. Its pathway is carbohydrate metabolism; tricarboxylic acid cycle; oxaloacetate from (S)-malate (quinone route): step 1/1. In Rhodococcus jostii (strain RHA1), this protein is Probable malate:quinone oxidoreductase.